A 348-amino-acid chain; its full sequence is Dihydroorotase (348 aa).

The Zn(2+) site is built by His-17 and His-19. Substrate contacts are provided by residues His-19–Arg-21 and Asn-45. Zn(2+) is bound by residues Lys-103, His-140, and His-178. Lys-103 is modified (N6-carboxylysine). His-140 is a substrate binding site. Leu-223 serves as a coordination point for substrate. Asp-251 is a binding site for Zn(2+). Asp-251 is a catalytic residue. Substrate-binding residues include His-255 and Ala-267.

The protein belongs to the metallo-dependent hydrolases superfamily. DHOase family. Class II DHOase subfamily. Homodimer. The cofactor is Zn(2+).

It carries out the reaction (S)-dihydroorotate + H2O = N-carbamoyl-L-aspartate + H(+). Its pathway is pyrimidine metabolism; UMP biosynthesis via de novo pathway; (S)-dihydroorotate from bicarbonate: step 3/3. Catalyzes the reversible cyclization of carbamoyl aspartate to dihydroorotate. This Escherichia coli (strain UTI89 / UPEC) protein is Dihydroorotase.